A 146-amino-acid polypeptide reads, in one-letter code: ATP synthase epsilon chain (146 aa).

The protein belongs to the ATPase epsilon chain family. F-type ATPases have 2 components, CF(1) - the catalytic core - and CF(0) - the membrane proton channel. CF(1) has five subunits: alpha(3), beta(3), gamma(1), delta(1), epsilon(1). CF(0) has three main subunits: a, b and c.

It is found in the cell inner membrane. Functionally, produces ATP from ADP in the presence of a proton gradient across the membrane. This chain is ATP synthase epsilon chain, found in Rhodospirillum centenum (strain ATCC 51521 / SW).